The following is a 61-amino-acid chain: Small ribosomal subunit protein uS14B (61 aa).

Positions 24, 27, 40, and 43 each coordinate Zn(2+).

Belongs to the universal ribosomal protein uS14 family. Zinc-binding uS14 subfamily. Part of the 30S ribosomal subunit. Contacts proteins S3 and S10. Zn(2+) serves as cofactor.

In terms of biological role, binds 16S rRNA, required for the assembly of 30S particles and may also be responsible for determining the conformation of the 16S rRNA at the A site. In Lacticaseibacillus paracasei (strain ATCC 334 / BCRC 17002 / CCUG 31169 / CIP 107868 / KCTC 3260 / NRRL B-441) (Lactobacillus paracasei), this protein is Small ribosomal subunit protein uS14B.